The following is a 108-amino-acid chain: Small ribosomal subunit protein uS17 (108 aa).

It belongs to the universal ribosomal protein uS17 family. As to quaternary structure, part of the 30S ribosomal subunit.

Its function is as follows. One of the primary rRNA binding proteins, it binds specifically to the 5'-end of 16S ribosomal RNA. The polypeptide is Small ribosomal subunit protein uS17 (Methanocorpusculum labreanum (strain ATCC 43576 / DSM 4855 / Z)).